We begin with the raw amino-acid sequence, 207 residues long: Outer-membrane lipoprotein carrier protein (207 aa).

The signal sequence occupies residues 1–21 (MRAIRMLLVSALTLGSVTAYA).

It belongs to the LolA family. As to quaternary structure, monomer.

Its subcellular location is the periplasm. Functionally, participates in the translocation of lipoproteins from the inner membrane to the outer membrane. Only forms a complex with a lipoprotein if the residue after the N-terminal Cys is not an aspartate (The Asp acts as a targeting signal to indicate that the lipoprotein should stay in the inner membrane). The sequence is that of Outer-membrane lipoprotein carrier protein from Pseudomonas putida (strain ATCC 47054 / DSM 6125 / CFBP 8728 / NCIMB 11950 / KT2440).